Here is a 507-residue protein sequence, read N- to C-terminus: ATP synthase subunit alpha, chloroplastic (507 aa).

170 to 177 is an ATP binding site; sequence GDRQTGKT.

The protein belongs to the ATPase alpha/beta chains family. As to quaternary structure, F-type ATPases have 2 components, CF(1) - the catalytic core - and CF(0) - the membrane proton channel. CF(1) has five subunits: alpha(3), beta(3), gamma(1), delta(1), epsilon(1). CF(0) has four main subunits: a, b, b' and c.

It localises to the plastid. It is found in the chloroplast thylakoid membrane. The enzyme catalyses ATP + H2O + 4 H(+)(in) = ADP + phosphate + 5 H(+)(out). Its function is as follows. Produces ATP from ADP in the presence of a proton gradient across the membrane. The alpha chain is a regulatory subunit. The sequence is that of ATP synthase subunit alpha, chloroplastic from Piper cenocladum (Ant piper).